The following is an 80-amino-acid chain: Exodeoxyribonuclease 7 small subunit (80 aa).

The protein belongs to the XseB family. As to quaternary structure, heterooligomer composed of large and small subunits.

Its subcellular location is the cytoplasm. It catalyses the reaction Exonucleolytic cleavage in either 5'- to 3'- or 3'- to 5'-direction to yield nucleoside 5'-phosphates.. Its function is as follows. Bidirectionally degrades single-stranded DNA into large acid-insoluble oligonucleotides, which are then degraded further into small acid-soluble oligonucleotides. The polypeptide is Exodeoxyribonuclease 7 small subunit (Pseudomonas putida (strain GB-1)).